Consider the following 496-residue polypeptide: Glutamate--cysteine ligase B, chloroplastic (496 aa).

Residues 1-34 (MAVASRLAVARVAPDGGAAGRRRRRRGRPVVAVP) constitute a chloroplast transit peptide. A disordered region spans residues 14 to 53 (PDGGAAGRRRRRRGRPVVAVPTAAGRGRGRGGAVAASPPT). The segment covering 29–38 (PVVAVPTAAG) has biased composition (low complexity). The cysteines at positions 160 and 380 are disulfide-linked.

It belongs to the carboxylate-amine ligase family. Glutamate--cysteine ligase type 2 subfamily. As to quaternary structure, homodimer or monomer when oxidized or reduced, respectively. In terms of processing, the Cys-160-Cys-380 disulfide bridge is known to modulate the enzyme activity according to the redox status. The oxidized form constitutes the active enzyme.

The protein localises to the plastid. The protein resides in the chloroplast. It carries out the reaction L-cysteine + L-glutamate + ATP = gamma-L-glutamyl-L-cysteine + ADP + phosphate + H(+). It participates in sulfur metabolism; glutathione biosynthesis; glutathione from L-cysteine and L-glutamate: step 1/2. The sequence is that of Glutamate--cysteine ligase B, chloroplastic (GSH1-2) from Oryza sativa subsp. japonica (Rice).